The chain runs to 233 residues: Gamma-glutamyl-hercynylcysteine sulfoxide hydrolase (233 aa).

Residue Cys-2 is the Nucleophile of the active site. The Glutamine amidotransferase type-2 domain occupies 2-233; sequence CRHLGWLGAQ…TALDRAKGPR (232 aa).

It catalyses the reaction gamma-L-glutamyl-hercynylcysteine S-oxide + H2O = S-(hercyn-2-yl)-L-cysteine S-oxide + L-glutamate. It functions in the pathway amino-acid biosynthesis; ergothioneine biosynthesis. In terms of biological role, catalyzes the hydrolysis of the gamma-glutamyl amide bond of hercynyl-gamma-L-glutamyl-L-cysteine sulfoxide to produce hercynylcysteine sulfoxide, a step in the biosynthesis pathway of ergothioneine. ERG is one of the major redox buffers which protects bacteria against redox stressors and antibiotics; loss of ERG or mycothiol (MSH, the other major redox buffer in this bacteria) leads to respiratory alterations and bioenergetic deficiencies that negatively impact virulence. This chain is Gamma-glutamyl-hercynylcysteine sulfoxide hydrolase, found in Mycobacterium tuberculosis (strain CDC 1551 / Oshkosh).